The sequence spans 793 residues: Plakophilin-3 (793 aa).

The tract at residues 56–82 (QLGQQPRHNGPAEPDGAAEAARGASRA) is disordered. A compositionally biased stretch (low complexity) spans 66–82 (PAEPDGAAEAARGASRA). Omega-N-methylarginine is present on arginine 81. Residues serine 122, serine 179, and serine 182 each carry the phosphoserine modification. Phosphotyrosine is present on tyrosine 194. The disordered stretch occupies residues 221–240 (SSSRAGGLDWPEATEGPPSR). Residue serine 239 is modified to Phosphoserine. Threonine 249 carries the phosphothreonine modification. The residue at position 260 (arginine 260) is an Omega-N-methylarginine. Serine 282, serine 310, serine 311, and serine 328 each carry phosphoserine. The tract at residues 282-285 (SLSL) is required for interaction with SFN. The tract at residues 291-720 (LPDMRGLDSY…ADVLINIIAV (430 aa)) is required for interaction with GSK3B. ARM repeat units follow at residues 302 to 345 (GHRT…HKCY), 348 to 387 (AAAK…NLVY), 390 to 429 (ADNK…NLSS), 446 to 484 (TDLV…NLSS), 488 to 533 (ATRQ…NLSY), 592 to 633 (PKGL…NITA), 641 to 680 (VLSR…NLSR), and 685 to 726 (KDEM…NLVV). The required for binding to PKP2 mRNA stretch occupies residues 513 to 793 (VGKCEDKSVE…GYRKEDFLGP (281 aa)).

It belongs to the beta-catenin family. As to quaternary structure, found in a complex composed of CDH1, RAP1A and PKP3; PKP3 acts as a scaffold protein within the complex, the complex is required for CDH1 localization to mature desmosome cell junctions. Interacts with FXR1; the interaction facilitates the binding of PKP3 to PKP2 mRNA. Interacts (via ARM repeats) with GSK3B; the interaction may be involved in PKP3 protein degradation. Interacts with hyperphosphorylated and hypophosphorylated RB1; the interaction inhibits RB1 interaction with and repression of the transcription factor E2F1, potentially via sequestering RB1 to the cytoplasm. Interacts with CDKN1A; the interaction sequesters CDKN1A to the cytoplasm thereby repressing its role as an inhibitor of CDK4- and CDK6-driven RB1 phosphorylation. Interacts (via N-terminus) with SFN; the interaction maintains the cytoplasmic pool of PKP3, facilitates PKP3 exchange at desmosomes and restricts PKP3 localization to existing desmosome cell junctions. Interacts (via N-terminus) with SFN; the interaction maintains the cytoplasmic pool of PKP3 and restricts PKP3 localization to existing desmosome cell junctions. Interacts (via N-terminus) with JUP; the interaction is required for PKP3 localization to desmosome cell-cell junctions. In terms of processing, phosphorylated at Ser-282 when localized to the cytoplasm, PKP3 at desmosome cell junctions is not phosphorylated. Phosphorylation at Try-194 by SRC is induced by reactive oxygen species and potentially acts as a release mechanism from desmosome cell-cell junctions.

It localises to the nucleus. Its subcellular location is the cell junction. The protein resides in the desmosome. It is found in the cytoplasm. The protein localises to the cell membrane. It localises to the adherens junction. A component of desmosome cell-cell junctions which are required for positive regulation of cellular adhesion. Required for the localization of DSG2, DSP and PKP2 to mature desmosome junctions. May also play a role in the maintenance of DSG3 protein abundance in keratinocytes. Required for the formation of DSP-containing desmosome precursors in the cytoplasm during desmosome assembly. Also regulates the accumulation of CDH1 to mature desmosome junctions, via cAMP-dependent signaling and its interaction with activated RAP1A. Positively regulates the stabilization of PKP2 mRNA and therefore protein abundance, via its interaction with FXR1, may also regulate the protein abundance of DSP via the same mechanism. May also regulate the protein abundance of the desmosome component PKP1. Required for the organization of desmosome junctions at intercellular borders between basal keratinocytes of the epidermis, as a result plays a role in maintenance of the dermal barrier and regulation of the dermal inflammatory response. Required during epidermal keratinocyte differentiation for cell adherence at tricellular cell-cell contacts, via regulation of the timely formation of adherens junctions and desmosomes in a calcium-dependent manner, and may also play a role in the organization of the intracellular actin fiber belt. Acts as a negative regulator of the inflammatory response in hematopoietic cells of the skin and intestine, via modulation of proinflammatory cytokine production. Important for epithelial barrier maintenance in the intestine to reduce intestinal permeability, thereby plays a role in protection from intestinal-derived endotoxemia. Required for the development of hair follicles, via a role in the regulation of inner root sheaf length, correct alignment and anterior-posterior polarity of hair follicles. Promotes proliferation and cell-cycle G1/S phase transition of keratinocytes. Promotes E2F1-driven transcription of G1/S phase promoting genes by acting to release E2F1 from its inhibitory interaction with RB1, via sequestering RB1 and CDKN1A to the cytoplasm and thereby increasing CDK4- and CDK6-driven phosphorylation of RB1. May act as a scaffold protein to facilitate MAPK phosphorylation of RPS6KA protein family members and subsequently promote downstream EGFR signaling. May play a role in the positive regulation of transcription of Wnt-mediated TCF-responsive target genes. The sequence is that of Plakophilin-3 (PKP3) from Bos taurus (Bovine).